Consider the following 567-residue polypeptide: TGF-beta receptor type-2 (567 aa).

Positions 1-22 (MGRGLLRGLWPLHIVLWTRIAS) are cleaved as a signal peptide. Over 23–166 (TIPPHVQKSV…NPDLLLVIFQ (144 aa)) the chain is Extracellular. 6 disulfides stabilise this stretch: cysteine 51–cysteine 84, cysteine 54–cysteine 71, cysteine 61–cysteine 67, cysteine 77–cysteine 101, cysteine 121–cysteine 136, and cysteine 138–cysteine 143. Residues asparagine 70 and asparagine 94 are each glycosylated (N-linked (GlcNAc...) asparagine). An N-linked (GlcNAc...) asparagine glycan is attached at asparagine 154. Residues 167–187 (VTGISLLPPLGVAISVIIIFY) form a helical membrane-spanning segment. At 188 to 567 (CYRVNRQQKL…PEDGSLNTTK (380 aa)) the chain is on the cytoplasmic side. Positions 244-544 (IELDTLVGKG…AERFSELEHL (301 aa)) constitute a Protein kinase domain. Residues 250–258 (VGKGRFAEV) and lysine 277 contribute to the ATP site. The active-site Proton acceptor is the aspartate 379. Phosphoserine occurs at positions 409, 548, and 553. Residues 439–567 (VESFKQTDVY…PEDGSLNTTK (129 aa)) form a sufficient for interaction with CLU region.

Belongs to the protein kinase superfamily. TKL Ser/Thr protein kinase family. TGFB receptor subfamily. Homodimer. Heterohexamer; TGFB1, TGFB2 and TGFB3 homodimeric ligands assemble a functional receptor composed of two TGFBR1 and TGFBR2 heterodimers to form a ligand-receptor heterohexamer. The respective affinity of TGFRB1 and TGFRB2 for the ligands may modulate the kinetics of assembly of the receptor and may explain the different biological activities of TGFB1, TGFB2 and TGFB3. Component of a complex composed of TSC22D1 (via N-terminus), TGFBR1 and TGFBR2; the interaction between TSC22D1 and TGFBR1 is inhibited by SMAD7 and promoted by TGFB1. Interacts with DAXX. Interacts with DYNLT4. Interacts with ZFYVE9; ZFYVE9 recruits SMAD2 and SMAD3 to the TGF-beta receptor. Interacts with and is activated by SCUBE3; this interaction does not affect TGFB1-binding to TGFBR2. Interacts with VPS39; this interaction is independent of the receptor kinase activity and of the presence of TGF-beta. Interacts with CLU. As to quaternary structure, homodimer; disulfide-linked. Mg(2+) serves as cofactor. Requires Mn(2+) as cofactor. Post-translationally, phosphorylated on a Ser/Thr residue in the cytoplasmic domain.

The protein resides in the cell membrane. The protein localises to the membrane raft. It localises to the secreted. It carries out the reaction L-threonyl-[receptor-protein] + ATP = O-phospho-L-threonyl-[receptor-protein] + ADP + H(+). It catalyses the reaction L-seryl-[receptor-protein] + ATP = O-phospho-L-seryl-[receptor-protein] + ADP + H(+). In terms of biological role, transmembrane serine/threonine kinase forming with the TGF-beta type I serine/threonine kinase receptor, TGFBR1, the non-promiscuous receptor for the TGF-beta cytokines TGFB1, TGFB2 and TGFB3. Transduces the TGFB1, TGFB2 and TGFB3 signal from the cell surface to the cytoplasm and thus regulates a plethora of physiological and pathological processes including cell cycle arrest in epithelial and hematopoietic cells, control of mesenchymal cell proliferation and differentiation, wound healing, extracellular matrix production, immunosuppression and carcinogenesis. The formation of the receptor complex composed of 2 TGFBR1 and 2 TGFBR2 molecules symmetrically bound to the cytokine dimer results in the phosphorylation and activation of TGFBR1 by the constitutively active TGFBR2. Activated TGFBR1 phosphorylates SMAD2 which dissociates from the receptor and interacts with SMAD4. The SMAD2-SMAD4 complex is subsequently translocated to the nucleus where it modulates the transcription of the TGF-beta-regulated genes. This constitutes the canonical SMAD-dependent TGF-beta signaling cascade. Also involved in non-canonical, SMAD-independent TGF-beta signaling pathways. Its function is as follows. Has transforming growth factor beta-activated receptor activity. Binds TGFB1, TGFB2 and TGFB3 in the picomolar affinity range without the participation of additional receptors. Blocks activation of SMAD2 and SMAD3 by TGFB1. This Homo sapiens (Human) protein is TGF-beta receptor type-2 (TGFBR2).